The sequence spans 140 residues: MTVGARLRSKASSLVGRGPLGRLRRAGDEETDAIVEHLEGEDEDPESQDCEREEDGRRAGTPSARRVHLAALPERYDSLEEPAPGDKPKKRYRRKLKKYGKNVGKAISKGCRYIVIGLQGFAAAYSAPFGVATSVVSFVR.

The disordered stretch occupies residues 1-95 (MTVGARLRSK…DKPKKRYRRK (95 aa)). Acidic residues predominate over residues 29–53 (EETDAIVEHLEGEDEDPESQDCERE). A helical membrane pass occupies residues 118-140 (LQGFAAAYSAPFGVATSVVSFVR).

It is found in the membrane. Its function is as follows. Regulates drug efflux through modulation of ABCB1 localization and activity. The polypeptide is Required for drug-induced death protein 1 (Rattus norvegicus (Rat)).